The chain runs to 397 residues: Pentatricopeptide repeat-containing protein At1g80150, mitochondrial (397 aa).

The N-terminal 81 residues, 1 to 81, are a transit peptide targeting the mitochondrion; the sequence is MLSLRHIRRF…FAFEDTVSRL (81 aa). PPR repeat units lie at residues 105 to 139, 140 to 170, 176 to 210, 211 to 245, 246 to 280, 281 to 315, 316 to 350, and 351 to 381; these read REGF…GCKR, SVKS…APSK, DAVS…GLTP, DVVT…GCKP, NLTT…QVEP, DSIT…GYKP, NLKI…KWYP, and NLDT…VHRR.

The protein belongs to the PPR family. P subfamily.

The protein localises to the mitochondrion. This chain is Pentatricopeptide repeat-containing protein At1g80150, mitochondrial, found in Arabidopsis thaliana (Mouse-ear cress).